The sequence spans 249 residues: Glucosamine-6-phosphate deaminase (249 aa).

The active-site Proton acceptor; for enolization step is the Asp-67. Asn-136 functions as the For ring-opening step in the catalytic mechanism. The active-site Proton acceptor; for ring-opening step is the His-138. Glu-143 acts as the For ring-opening step in catalysis.

Belongs to the glucosamine/galactosamine-6-phosphate isomerase family. NagB subfamily.

The catalysed reaction is alpha-D-glucosamine 6-phosphate + H2O = beta-D-fructose 6-phosphate + NH4(+). It functions in the pathway amino-sugar metabolism; N-acetylneuraminate degradation; D-fructose 6-phosphate from N-acetylneuraminate: step 5/5. Catalyzes the reversible isomerization-deamination of glucosamine 6-phosphate (GlcN6P) to form fructose 6-phosphate (Fru6P) and ammonium ion. This Clostridium botulinum (strain Eklund 17B / Type B) protein is Glucosamine-6-phosphate deaminase.